Consider the following 249-residue polypeptide: 5'-nucleotidase SurE (249 aa).

A divalent metal cation-binding residues include Asp-8, Asp-9, Ser-39, and Asn-91.

Belongs to the SurE nucleotidase family. It depends on a divalent metal cation as a cofactor.

The protein resides in the cytoplasm. The enzyme catalyses a ribonucleoside 5'-phosphate + H2O = a ribonucleoside + phosphate. Its function is as follows. Nucleotidase that shows phosphatase activity on nucleoside 5'-monophosphates. The chain is 5'-nucleotidase SurE from Pseudomonas putida (strain ATCC 47054 / DSM 6125 / CFBP 8728 / NCIMB 11950 / KT2440).